The primary structure comprises 270 residues: Putative carboxymethylenebutenolidase (270 aa).

Catalysis depends on residues Cys147, Asp204, and His236.

Belongs to the dienelactone hydrolase family.

It carries out the reaction 2-(5-oxo-2,5-dihydrofuran-2-ylidene)acetate + H2O = 4-oxohex-2-enedioate + H(+). The sequence is that of Putative carboxymethylenebutenolidase (ysgA) from Salmonella typhimurium (strain LT2 / SGSC1412 / ATCC 700720).